The following is a 149-amino-acid chain: Dehydrin Rab15 (149 aa).

A disordered region spans residues 1-149 (MEFQGQHDNP…KIKEKLPGQH (149 aa)). Over residues 78 to 93 (KEKIKEKLPGGHKDNQ) the composition is skewed to basic and acidic residues. The span at 100-117 (TGTGGAYGPGTGTGGAYG) shows a compositional bias: gly residues. Over residues 132–149 (GEKKGIMDKIKEKLPGQH) the composition is skewed to basic and acidic residues.

Belongs to the plant dehydrin family.

The polypeptide is Dehydrin Rab15 (RAB15) (Triticum aestivum (Wheat)).